The chain runs to 637 residues: Rab11 family-interacting protein 4 (637 aa).

An EF-hand domain is found at 49-84 (GQGEEVEKLVKYLDPNDLGRINFKDFCRGVFAMKGC). Residues aspartate 62, asparagine 64, arginine 68, and aspartate 73 each contribute to the Ca(2+) site. Residues 82–637 (KGCEELLKDV…HNPSILEIKH (556 aa)) form a necessary for interaction with RAB11A, subcellular location, homo- or heterooligomerization region. Disordered stretches follow at residues 138–175 (EEEA…PAEK) and 219–256 (YGEG…SAGQ). Residues 280 to 617 (KINLLNDLEA…EEINFRLRQY (338 aa)) are a coiled coil. In terms of domain architecture, FIP-RBD spans 574–636 (EAKNLFAAQT…DHNPSILEIK (63 aa)).

As to quaternary structure, homodimer. Forms a complex with Rab11 (RAB11A or RAB11B) and ARF6. Interacts with RAB11A; the interaction is direct. Forms a heterooligomeric complex with RAB11FIP2, RAB11FIP3 and RAB11FIP5. Interacts with ECPAS. In terms of assembly, (Microbial infection) Interacts with human cytomegalovirus/HHV-5 protein gM/UL100. In terms of tissue distribution, present at high level in testis (at protein level). Weakly expressed in other tissues.

The protein resides in the endosome. Its subcellular location is the cytoplasm. The protein localises to the cytoskeleton. It localises to the spindle. It is found in the microtubule organizing center. The protein resides in the centrosome. Its subcellular location is the recycling endosome membrane. The protein localises to the cleavage furrow. It localises to the midbody. It is found in the cytoplasmic vesicle. Its function is as follows. Acts as a regulator of endocytic traffic by participating in membrane delivery. Required for the abscission step in cytokinesis, possibly by acting as an 'address tag' delivering recycling endosome membranes to the cleavage furrow during late cytokinesis. In case of infection by HCMV (human cytomegalovirus), may participate in egress of the virus out of nucleus; this function is independent of ARF6. The sequence is that of Rab11 family-interacting protein 4 (RAB11FIP4) from Homo sapiens (Human).